The primary structure comprises 209 residues: Large ribosomal subunit protein uL3 (209 aa).

A disordered region spans residues 119-145; sequence AIKRHGQSRGPMSHGSHFHRAPGSVGM.

It belongs to the universal ribosomal protein uL3 family. In terms of assembly, part of the 50S ribosomal subunit. Forms a cluster with proteins L14 and L19.

One of the primary rRNA binding proteins, it binds directly near the 3'-end of the 23S rRNA, where it nucleates assembly of the 50S subunit. The sequence is that of Large ribosomal subunit protein uL3 from Staphylococcus aureus (strain COL).